A 523-amino-acid polypeptide reads, in one-letter code: MAAVGRVGSFGSSPPGLSSTYTGGPLGNEIASGNGGAAAGDDEDGQNLWSCILSEVSTRSRSKLPAGKNVLLLGEDGAGKTSLIRKIQGIEEYKKGRGLEYLYLNVHDEDRDDQTRCNVWILDGDLYHKGLLKFSLDAVSLKDTLVMLVVDMSKPWTALDSLQKWASVVREHVDKLKIPPEEMKQMEQKLIRDFQEYVEPGEDFPASPQRRNTASQEDKDDSVVLPLGADTLTHNLGIPVLVVCTKCDAISVLEKEHDYRDEHFDFIQSHIRKFCLQYGAALIYTSVKENKNIDLVYKYIVQKLYGFPYKIPAVVVEKDAVFIPAGWDNDKKIGILHENFQTLKAEDNFEDIITKPPVRKFVHEKEIMAEDDQVFLMKLQSLLAKQPPTAAGRPVDASPRVPGGSPRTPNRSVSSNVASVSPIPAGSKKIDPNMKAGATSEGVLANFFNSLLSKKTGSPGGPGVSGGSPAGGAGGGSSGLPPSTKKSGQKPVLDVHAELDRITRKPVTVSPTTPTSPTEGEAS.

The disordered stretch occupies residues M1–P25. Low complexity predominate over residues S9 to S19. G74–T81 contributes to the ATP binding site. At S207 the chain carries Phosphoserine. A Phosphothreonine modification is found at T213. Disordered stretches follow at residues P387–M434 and T456–S523. 2 positions are modified to phosphoserine: S398 and S405. T408 is modified (phosphothreonine). Residues S412, S419, S421, and S427 each carry the phosphoserine modification. Residues S412–S421 are compositionally biased toward low complexity. A compositionally biased stretch (gly residues) spans S458–S478. A Phosphoserine modification is found at S487. Residues L493–T503 are compositionally biased toward basic and acidic residues. The segment covering P506 to S523 has biased composition (low complexity). S510 bears the Phosphoserine mark. A phosphothreonine mark is found at T512, T513, and T515. S516 bears the Phosphoserine mark.

Belongs to the dynein light intermediate chain family. As to quaternary structure, homodimer. The cytoplasmic dynein 1 complex consists of two catalytic heavy chains (HCs) and a number of non-catalytic subunits presented by intermediate chains (ICs), light intermediate chains (LICs) and light chains (LCs); the composition seems to vary in respect to the IC, LIC and LC composition. The heavy chain homodimer serves as a scaffold for the probable homodimeric assembly of the respective non-catalytic subunits. The ICs and LICs bind directly to the HC dimer and the LCs assemble on the IC dimer. Self-associates. Interacts with DYNC1H1; DYNC1LI1 and DYNC1LI2 bind mutually exclusive to DYNC1H1. Interacts with PCNT. Forms a complex with RAB11FIP3 and RAB11A1; the interaction between DYNC1LI1 and RAB11FIP3 is direct and induces DYNC1LI1 localization onto endosomal membrane; the complex regulates endocytic trafficking. Interacts with RUFY3. In terms of assembly, (Microbial infection) Interacts with human adenovirus 5 hexon protein; this interaction probably allows virus intracellular transport. Phosphorylated during mitosis but not in interphase.

The protein resides in the cytoplasm. The protein localises to the chromosome. Its subcellular location is the centromere. It localises to the kinetochore. It is found in the cytoskeleton. The protein resides in the spindle pole. The protein localises to the recycling endosome membrane. Its function is as follows. Acts as one of several non-catalytic accessory components of the cytoplasmic dynein 1 complex that are thought to be involved in linking dynein to cargos and to adapter proteins that regulate dynein function. Cytoplasmic dynein 1 acts as a motor for the intracellular retrograde motility of vesicles and organelles along microtubules. May play a role in binding dynein to membranous organelles or chromosomes. Probably involved in the microtubule-dependent transport of pericentrin. Is required for progress through the spindle assembly checkpoint. The phosphorylated form appears to be involved in the selective removal of MAD1L1 and MAD1L2 but not BUB1B from kinetochores. Forms a functional Rab11/RAB11FIP3/dynein complex onto endosomal membrane that regulates the movement of peripheral sorting endosomes (SE) along microtubule tracks toward the microtubule organizing center/centrosome, generating the endosomal recycling compartment (ERC). The polypeptide is Cytoplasmic dynein 1 light intermediate chain 1 (DYNC1LI1) (Homo sapiens (Human)).